Reading from the N-terminus, the 113-residue chain is U11-theraphotoxin-Hhn1a (113 aa).

The first 21 residues, 1-21, serve as a signal peptide directing secretion; the sequence is MNTVRVAFLLVFVLAVSLGQA. Residues 22–74 constitute a propeptide that is removed on maturation; it reads DKDENRMEMQEKTEQGKSYLDFAENLLLQKLEELEAKLLEEDSEESRNSRQKR. Positions 61-83 are disordered; that stretch reads EEDSEESRNSRQKRCIGEGVPCD. Intrachain disulfides connect Cys75–Cys90, Cys82–Cys95, and Cys89–Cys110.

This sequence belongs to the neurotoxin 14 (magi-1) family. 01 (HNTX-16) subfamily. As to expression, expressed by the venom gland.

It localises to the secreted. Its function is as follows. Probable ion channel inhibitor. This chain is U11-theraphotoxin-Hhn1a, found in Cyriopagopus hainanus (Chinese bird spider).